A 209-amino-acid polypeptide reads, in one-letter code: Thiamine-phosphate synthase (209 aa).

Residues 36–40 (QYRDK) and asparagine 68 contribute to the 4-amino-2-methyl-5-(diphosphooxymethyl)pyrimidine site. Residues aspartate 69 and aspartate 87 each contribute to the Mg(2+) site. Threonine 106 is a 4-amino-2-methyl-5-(diphosphooxymethyl)pyrimidine binding site. Residue 133–135 (SST) coordinates 2-[(2R,5Z)-2-carboxy-4-methylthiazol-5(2H)-ylidene]ethyl phosphate. Position 136 (lysine 136) interacts with 4-amino-2-methyl-5-(diphosphooxymethyl)pyrimidine. A 2-[(2R,5Z)-2-carboxy-4-methylthiazol-5(2H)-ylidene]ethyl phosphate-binding site is contributed by glycine 163.

The protein belongs to the thiamine-phosphate synthase family. Mg(2+) serves as cofactor.

The enzyme catalyses 2-[(2R,5Z)-2-carboxy-4-methylthiazol-5(2H)-ylidene]ethyl phosphate + 4-amino-2-methyl-5-(diphosphooxymethyl)pyrimidine + 2 H(+) = thiamine phosphate + CO2 + diphosphate. It catalyses the reaction 2-(2-carboxy-4-methylthiazol-5-yl)ethyl phosphate + 4-amino-2-methyl-5-(diphosphooxymethyl)pyrimidine + 2 H(+) = thiamine phosphate + CO2 + diphosphate. It carries out the reaction 4-methyl-5-(2-phosphooxyethyl)-thiazole + 4-amino-2-methyl-5-(diphosphooxymethyl)pyrimidine + H(+) = thiamine phosphate + diphosphate. It functions in the pathway cofactor biosynthesis; thiamine diphosphate biosynthesis; thiamine phosphate from 4-amino-2-methyl-5-diphosphomethylpyrimidine and 4-methyl-5-(2-phosphoethyl)-thiazole: step 1/1. Condenses 4-methyl-5-(beta-hydroxyethyl)thiazole monophosphate (THZ-P) and 2-methyl-4-amino-5-hydroxymethyl pyrimidine pyrophosphate (HMP-PP) to form thiamine monophosphate (TMP). The protein is Thiamine-phosphate synthase of Pseudomonas aeruginosa (strain UCBPP-PA14).